Here is a 130-residue protein sequence, read N- to C-terminus: ATP synthase epsilon chain, chloroplastic (130 aa).

The protein belongs to the ATPase epsilon chain family. F-type ATPases have 2 components, CF(1) - the catalytic core - and CF(0) - the membrane proton channel. CF(1) has five subunits: alpha(3), beta(3), gamma(1), delta(1), epsilon(1). CF(0) has three main subunits: a, b and c.

The protein localises to the plastid. It localises to the chloroplast thylakoid membrane. Produces ATP from ADP in the presence of a proton gradient across the membrane. In Emiliania huxleyi (Coccolithophore), this protein is ATP synthase epsilon chain, chloroplastic.